Consider the following 707-residue polypeptide: uncharacterized protein (707 aa).

2 disordered regions span residues 15 to 122 (ALAK…LESY) and 667 to 707 (ESVQ…DIDE). 2 stretches are compositionally biased toward basic and acidic residues: residues 18–32 (KKND…DKGI) and 40–52 (EGKD…DVEK). Residue S112 is modified to Phosphoserine. The stretch at 659–700 (EEQRKLIRESVQQDQEHKEQMRQKKKQALKSDDIELDDLSEE) forms a coiled coil. Over residues 692 to 707 (IELDDLSEEEAEDIDE) the composition is skewed to acidic residues.

The protein belongs to the NOC2 family.

It localises to the nucleus. The protein localises to the nucleolus. This is an uncharacterized protein from Schizosaccharomyces pombe (strain 972 / ATCC 24843) (Fission yeast).